The primary structure comprises 67 residues: Large ribosomal subunit protein bL32 (67 aa).

Basic residues predominate over residues 1–19; that stretch reads MAVPKRKMSRSNTRSRRSQ. The interval 1 to 22 is disordered; it reads MAVPKRKMSRSNTRSRRSQWKA.

Belongs to the bacterial ribosomal protein bL32 family.

In Kineococcus radiotolerans (strain ATCC BAA-149 / DSM 14245 / SRS30216), this protein is Large ribosomal subunit protein bL32.